Here is a 1000-residue protein sequence, read N- to C-terminus: Sop-2-related protein 1 (1000 aa).

3 disordered regions span residues 355–374, 379–422, and 466–509; these read KIMK…QYQQ, HQQH…GPSE, and APSE…VARG. The span at 390–404 shows a compositional bias: low complexity; sequence SSSSVPSTSSPSCSS. Positions 406 to 415 are enriched in basic and acidic residues; sequence ANRKEMETVR. Positions 489-502 are enriched in low complexity; the sequence is GPSQQQQIPGTSQQ. Residues 633–720 form an RNA-binding region; it reads REQILPQQYM…LNTSSVQPSE (88 aa). The disordered stretch occupies residues 948 to 1000; that stretch reads HRMHSQRPPSMGNSSTSSEASSTSPTNAATATSSPASNRPTTSTAQPPTLNPT. The span at 960–992 shows a compositional bias: low complexity; sequence NSSTSSEASSTSPTNAATATSSPASNRPTTSTA.

As to quaternary structure, binds through its N-terminal region to the N-terminal region of sop-2.

It is found in the nucleus. In terms of biological role, acts synergistically with sop-2 to maintain the transcriptionally repressive state of homeotic genes throughout development. Not required to initiate repression, but to maintain it during later stages of development. Also required to repress expression of other genes. Binds RNA in a sequence-independent manner. The polypeptide is Sop-2-related protein 1 (sor-1) (Caenorhabditis elegans).